Consider the following 259-residue polypeptide: GTP cyclohydrolase FolE2 (259 aa).

The protein belongs to the GTP cyclohydrolase IV family.

The enzyme catalyses GTP + H2O = 7,8-dihydroneopterin 3'-triphosphate + formate + H(+). The protein operates within cofactor biosynthesis; 7,8-dihydroneopterin triphosphate biosynthesis; 7,8-dihydroneopterin triphosphate from GTP: step 1/1. Functionally, converts GTP to 7,8-dihydroneopterin triphosphate. This chain is GTP cyclohydrolase FolE2, found in Halorhodospira halophila (strain DSM 244 / SL1) (Ectothiorhodospira halophila (strain DSM 244 / SL1)).